Reading from the N-terminus, the 351-residue chain is Photosystem II D2 protein (351 aa).

A helical membrane pass occupies residues 39 to 59 (TAYLAIGGWLTGTTFVTSWYT). H116 serves as a coordination point for chlorophyll a. Residues 123–139 (GFMLRQFELARLIGIRP) traverse the membrane as a helical segment. The pheophytin a site is built by Q128 and N141. Residues 151 to 164 (VFVSVFLLYPLGQS) form a helical membrane-spanning segment. H196 serves as a coordination point for chlorophyll a. The helical transmembrane segment at 206–226 (GALLSAIHGVTVENTLYEDGE) threads the bilayer. H213 and F260 together coordinate a plastoquinone. Residue H213 participates in Fe cation binding. Residue H267 coordinates Fe cation. The helical transmembrane segment at 277–293 (GLWTSSIGIIGLALNLR) threads the bilayer.

This sequence belongs to the reaction center PufL/M/PsbA/D family. In terms of assembly, PSII is composed of 1 copy each of membrane proteins PsbA, PsbB, PsbC, PsbD, PsbE, PsbF, PsbH, PsbI, PsbJ, PsbK, PsbL, PsbM, PsbT, PsbX, PsbY, PsbZ, Psb30/Ycf12, peripheral proteins PsbO, CyanoQ (PsbQ), PsbU, PsbV and a large number of cofactors. It forms dimeric complexes. Requires The D1/D2 heterodimer binds P680, chlorophylls that are the primary electron donor of PSII, and subsequent electron acceptors. It shares a non-heme iron and each subunit binds pheophytin, quinone, additional chlorophylls, carotenoids and lipids. There is also a Cl(-1) ion associated with D1 and D2, which is required for oxygen evolution. The PSII complex binds additional chlorophylls, carotenoids and specific lipids. as cofactor.

It is found in the host cellular thylakoid membrane. It carries out the reaction 2 a plastoquinone + 4 hnu + 2 H2O = 2 a plastoquinol + O2. Functionally, photosystem II (PSII) is a light-driven water:plastoquinone oxidoreductase that uses light energy to abstract electrons from H(2)O, generating O(2) and a proton gradient subsequently used for ATP formation. It consists of a core antenna complex that captures photons, and an electron transfer chain that converts photonic excitation into a charge separation. The D1/D2 (PsbA/PsbD) reaction center heterodimer binds P680, the primary electron donor of PSII as well as several subsequent electron acceptors. D2 is needed for assembly of a stable PSII complex. The chain is Photosystem II D2 protein (psbD) from Synechococcus.